Consider the following 568-residue polypeptide: MFS-type efflux transporter phmH (568 aa).

The span at 1–11 (MVSGTDTTEVG) shows a compositional bias: polar residues. Residues 1 to 39 (MVSGTDTTEVGATTKAPPSEGTEGILDDHSSNSQPQAEK) form a disordered region. The next 7 helical transmembrane spans lie at 45–65 (YPLSFWLAFLGLCCTGLVSAL), 101–121 (YVMIGATIIFILGSGLCGGSS), 134–154 (GIGAGGINMLIDMIICDLVPM), 161–181 (IGLLFLFVSLGATIGPFVGGI), 199–219 (IFYINLPFGGVALLLLILFLH), 237–257 (VIGNSILIGATFAILYALTYG), and 268–288 (IAAPLTIGLVGLVAAFFWEMS). Asparagine 303 carries an N-linked (GlcNAc...) asparagine glycan. Transmembrane regions (helical) follow at residues 307–327 (AAAFFISFMCMLLAFWINFFY), 344–364 (VYTLPRAIAFPLFAAVGGAIV), 372–392 (TVHLVSTGIMPLVMGLSSILD), 399–419 (EWVIWQLLFGVSGGMMISTTL), 437–457 (TWSFVRSLGTIWGLSIPAAIF), and 515–535 (IGIVFGGVTFLSVFFEKEIHL). N-linked (GlcNAc...) asparagine glycosylation is present at asparagine 563.

Belongs to the major facilitator superfamily.

It is found in the cell membrane. Functionally, MFS-type efflux transporter; part of the gene cluster that mediates the biosynthesis of thethe mycotoxins phomacins, leucine-derived cytochalasans with potent actin polymerization-inhibitory activities and monocot-specific antigerminative activities. PhmH might be involved in the excretion of phomacins. The polypeptide is MFS-type efflux transporter phmH (Phaeosphaeria nodorum (strain SN15 / ATCC MYA-4574 / FGSC 10173) (Glume blotch fungus)).